A 621-amino-acid polypeptide reads, in one-letter code: DnaJ homolog subfamily C member 2 (621 aa).

Residue methionine 1 is modified to N-acetylmethionine. The interval serine 23–valine 31 is epitope (recognized by CD8(+) cytotoxic T-lymphocytes). A phosphoserine mark is found at serine 47, serine 49, serine 60, and serine 63. A J domain is found at aspartate 88–aspartate 161. The ZRF1-UBD stretch occupies residues valine 160–glutamine 250. 2 disordered regions span residues glutamate 294–alanine 315 and lysine 426–asparagine 453. 2 SANT domains span residues asparagine 449–proline 511 and threonine 549–lysine 604.

Component of ribosome-associated complex (RAC), a heterodimer composed of Hsp70/DnaK-type chaperone HSPA14 and Hsp40/DnaJ-type chaperone DNAJC2. Interacts (via ZRF1-UBD region) with ID1. Phosphorylated in M (mitotic) phase. As to expression, widely expressed.

Its subcellular location is the nucleus. It is found in the cytoplasm. The protein resides in the cytosol. In terms of biological role, acts both as a chaperone in the cytosol and as a chromatin regulator in the nucleus. When cytosolic, acts as a molecular chaperone: component of the ribosome-associated complex (RAC), a complex involved in folding or maintaining nascent polypeptides in a folding-competent state. In the RAC complex, stimulates the ATPase activity of the ribosome-associated pool of Hsp70-type chaperones HSPA14 that bind to the nascent polypeptide chain. When nuclear, mediates the switching from polycomb-repressed genes to an active state: specifically recruited at histone H2A ubiquitinated at 'Lys-119' (H2AK119ub), and promotes the displacement of the polycomb PRC1 complex from chromatin, thereby facilitating transcription activation. The protein is DnaJ homolog subfamily C member 2 (DNAJC2) of Homo sapiens (Human).